Here is a 366-residue protein sequence, read N- to C-terminus: 3-dehydroquinate synthase (366 aa).

NAD(+) is bound by residues 74 to 79 (SGEAAK), 108 to 112 (GVVGD), 132 to 133 (TT), K144, K153, and 171 to 174 (FLRT). Residues E186, H249, and H266 each contribute to the Zn(2+) site.

Belongs to the sugar phosphate cyclases superfamily. Dehydroquinate synthase family. Requires Co(2+) as cofactor. It depends on Zn(2+) as a cofactor. NAD(+) is required as a cofactor.

It localises to the cytoplasm. The catalysed reaction is 7-phospho-2-dehydro-3-deoxy-D-arabino-heptonate = 3-dehydroquinate + phosphate. The protein operates within metabolic intermediate biosynthesis; chorismate biosynthesis; chorismate from D-erythrose 4-phosphate and phosphoenolpyruvate: step 2/7. Its function is as follows. Catalyzes the conversion of 3-deoxy-D-arabino-heptulosonate 7-phosphate (DAHP) to dehydroquinate (DHQ). The sequence is that of 3-dehydroquinate synthase from Geobacillus thermodenitrificans (strain NG80-2).